Reading from the N-terminus, the 444-residue chain is Na(+)/H(+) antiporter NhaA (444 aa).

A run of 11 helical transmembrane segments spans residues 27 to 47 (TTGL…NSPL), 72 to 92 (IHHW…GLEI), 108 to 128 (MLPI…YYAI), 136 to 156 (AGWG…LVLL), 167 to 187 (FLVA…ALFY), 190 to 210 (EINM…VSFN), 212 to 232 (FGIH…LFML), 312 to 332 (HLPV…GVSI), 349 to 369 (VMAG…YLAI), 385 to 405 (VFGV…IAEL), and 419 to 439 (IGIL…LRFI).

It belongs to the NhaA Na(+)/H(+) (TC 2.A.33) antiporter family.

It localises to the cell inner membrane. The enzyme catalyses Na(+)(in) + 2 H(+)(out) = Na(+)(out) + 2 H(+)(in). Na(+)/H(+) antiporter that extrudes sodium in exchange for external protons. The protein is Na(+)/H(+) antiporter NhaA of Sulfurimonas denitrificans (strain ATCC 33889 / DSM 1251) (Thiomicrospira denitrificans (strain ATCC 33889 / DSM 1251)).